The following is a 244-amino-acid chain: Phosphoadenosine 5'-phosphosulfate reductase (244 aa).

The active-site Nucleophile; cysteine thiosulfonate intermediate is the Cys239.

Belongs to the PAPS reductase family. CysH subfamily.

It localises to the cytoplasm. It catalyses the reaction [thioredoxin]-disulfide + sulfite + adenosine 3',5'-bisphosphate + 2 H(+) = [thioredoxin]-dithiol + 3'-phosphoadenylyl sulfate. It functions in the pathway sulfur metabolism; hydrogen sulfide biosynthesis; sulfite from sulfate: step 3/3. In terms of biological role, catalyzes the formation of sulfite from phosphoadenosine 5'-phosphosulfate (PAPS) using thioredoxin as an electron donor. The protein is Phosphoadenosine 5'-phosphosulfate reductase of Escherichia coli O8 (strain IAI1).